The primary structure comprises 407 residues: Ornithine cyclodeaminase (407 aa).

10 residues coordinate NAD(+): Asn233, Ala234, Asp312, Thr344, Met345, Leu346, His347, Asp365, Asp388, and Val389.

The protein belongs to the AgrE/ArgZ ornithine cyclodeaminase family. Requires NAD(+) as cofactor.

The catalysed reaction is L-ornithine = L-proline + NH4(+). Functionally, catalyzes the conversion of ornithine to proline, with the release of ammonia. The chain is Ornithine cyclodeaminase from Archaeoglobus fulgidus (strain ATCC 49558 / DSM 4304 / JCM 9628 / NBRC 100126 / VC-16).